We begin with the raw amino-acid sequence, 121 residues long: Phosphoribosyl-ATP pyrophosphatase (121 aa).

This sequence belongs to the PRA-PH family.

It localises to the cytoplasm. The catalysed reaction is 1-(5-phospho-beta-D-ribosyl)-ATP + H2O = 1-(5-phospho-beta-D-ribosyl)-5'-AMP + diphosphate + H(+). It functions in the pathway amino-acid biosynthesis; L-histidine biosynthesis; L-histidine from 5-phospho-alpha-D-ribose 1-diphosphate: step 2/9. The polypeptide is Phosphoribosyl-ATP pyrophosphatase (Burkholderia multivorans (strain ATCC 17616 / 249)).